Reading from the N-terminus, the 188-residue chain is Cytidylate kinase (188 aa).

Residue 7-15 participates in ATP binding; sequence GKIGSGKST.

Belongs to the cytidylate kinase family. Type 2 subfamily.

It is found in the cytoplasm. It catalyses the reaction CMP + ATP = CDP + ADP. The catalysed reaction is dCMP + ATP = dCDP + ADP. The polypeptide is Cytidylate kinase (cmk) (Thermoplasma acidophilum (strain ATCC 25905 / DSM 1728 / JCM 9062 / NBRC 15155 / AMRC-C165)).